Here is a 699-residue protein sequence, read N- to C-terminus: MNLWTDDNASMMEAFMASADLPAFPWGAASTPPPPPPPPHHHHQQQQQQVLPPPAAAPAAAAFNQDTLQQRLQSIIEGSRETWTYAIFWQSSIDVSTGASLLGWGDGYYKGCDDDKRKQRSSTPAAAAEQEHRKRVLRELNSLIAGAGAAPDEAVEEEVTDTEWFFLVSMTQSFPNGLGLPGQALFAAQPTWIATGLSSAPCDRARQAYTFGLRTMVCLPLATGVLELGSTDVIFQTGDSIPRIRALFNLSAAAASSWPPHPDAASADPSVLWLADAPPMDMKDSISAADISVSKPPPPPPHQIQHFENGSTSTLTENPSPSVHAPTPSQPAAPPQRQQQQQQSSQAQQGPFRRELNFSDFASNGGAAAPPFFKPETGEILNFGNDSSSGRRNPSPAPPAATASLTTAPGSLFSQHTPTLTAAANDAKSNNQKRSMEATSRASNTNNHPAATANEGMLSFSSAPTTRPSTGTGAPAKSESDHSDLEASVREVESSRVVAPPPEAEKRPRKRGRKPANGREEPLNHVEAERQRREKLNQRFYALRAVVPNVSKMDKASLLGDAISYINELRGKLTALETDKETLQSQMESLKKERDARPPAPSGGGGDGGARCHAVEIEAKILGLEAMIRVQCHKRNHPAARLMTALRELDLDVYHASVSVVKDLMIQQVAVKMASRVYSQDQLNAALYTRIAEPGTAAR.

A disordered region spans residues 25–60 (PWGAASTPPPPPPPPHHHHQQQQQQVLPPPAAAPAA). Positions 93-158 (IDVSTGASLL…AAPDEAVEEE (66 aa)) are JAZ-interaction domain. Residues 290-530 (DISVSKPPPP…EPLNHVEAER (241 aa)) are disordered. Over residues 306-321 (HFENGSTSTLTENPSP) the composition is skewed to polar residues. Composition is skewed to low complexity over residues 335-349 (PQRQ…QAQQ) and 387-412 (SSSG…PGSL). Polar residues-rich tracts occupy residues 413-449 (FSQH…NNHP) and 459-472 (SFSS…STGT). Residues 478-494 (SESDHSDLEASVREVES) show a composition bias toward basic and acidic residues. Residues 506–514 (KRPRKRGRK) carry the Nuclear localization signal motif. A compositionally biased stretch (basic residues) spans 507–516 (RPRKRGRKPA). A compositionally biased stretch (basic and acidic residues) spans 517–530 (NGREEPLNHVEAER). Residues 520-533 (EEPLNHVEAERQRR) are basic motif; degenerate. The bHLH domain occupies 520–569 (EEPLNHVEAERQRREKLNQRFYALRAVVPNVSKMDKASLLGDAISYINEL). The segment at 534–569 (EKLNQRFYALRAVVPNVSKMDKASLLGDAISYINEL) is helix-loop-helix motif. A disordered region spans residues 582 to 611 (TLQSQMESLKKERDARPPAPSGGGGDGGAR).

The protein belongs to the bHLH protein family. In terms of assembly, interacts with TIFY3/JAZ1. In terms of tissue distribution, highly expressed in spikelets and floral organs.

It is found in the nucleus. Its function is as follows. Transcriptional activator involved in jasmonate (JA) signaling pathway during spikelet development. Binds to the G2 region G-box (5'-CACGTG-3') of the MADS1 promoter and thus directly regulates the expression of MADS1. Its function in MADS1 activation is abolished by TIFY3/JAZ1 which directly target MYC2 during spikelet development. The sequence is that of Transcription factor MYC2 from Oryza sativa subsp. japonica (Rice).